The chain runs to 315 residues: 4-hydroxy-3-methylbut-2-enyl diphosphate reductase (315 aa).

Cysteine 12 lines the [4Fe-4S] cluster pocket. The (2E)-4-hydroxy-3-methylbut-2-enyl diphosphate site is built by histidine 43 and histidine 81. Dimethylallyl diphosphate-binding residues include histidine 43 and histidine 81. Positions 43 and 81 each coordinate isopentenyl diphosphate. Cysteine 103 serves as a coordination point for [4Fe-4S] cluster. Histidine 131 contributes to the (2E)-4-hydroxy-3-methylbut-2-enyl diphosphate binding site. Histidine 131 is a binding site for dimethylallyl diphosphate. Residue histidine 131 coordinates isopentenyl diphosphate. Residue glutamate 133 is the Proton donor of the active site. Threonine 170 is a (2E)-4-hydroxy-3-methylbut-2-enyl diphosphate binding site. Cysteine 198 is a [4Fe-4S] cluster binding site. 3 residues coordinate (2E)-4-hydroxy-3-methylbut-2-enyl diphosphate: serine 226, asparagine 228, and serine 271. Residues serine 226, asparagine 228, and serine 271 each contribute to the dimethylallyl diphosphate site. Isopentenyl diphosphate is bound by residues serine 226, asparagine 228, and serine 271.

This sequence belongs to the IspH family. It depends on [4Fe-4S] cluster as a cofactor.

The enzyme catalyses isopentenyl diphosphate + 2 oxidized [2Fe-2S]-[ferredoxin] + H2O = (2E)-4-hydroxy-3-methylbut-2-enyl diphosphate + 2 reduced [2Fe-2S]-[ferredoxin] + 2 H(+). The catalysed reaction is dimethylallyl diphosphate + 2 oxidized [2Fe-2S]-[ferredoxin] + H2O = (2E)-4-hydroxy-3-methylbut-2-enyl diphosphate + 2 reduced [2Fe-2S]-[ferredoxin] + 2 H(+). It functions in the pathway isoprenoid biosynthesis; dimethylallyl diphosphate biosynthesis; dimethylallyl diphosphate from (2E)-4-hydroxy-3-methylbutenyl diphosphate: step 1/1. The protein operates within isoprenoid biosynthesis; isopentenyl diphosphate biosynthesis via DXP pathway; isopentenyl diphosphate from 1-deoxy-D-xylulose 5-phosphate: step 6/6. Its function is as follows. Catalyzes the conversion of 1-hydroxy-2-methyl-2-(E)-butenyl 4-diphosphate (HMBPP) into a mixture of isopentenyl diphosphate (IPP) and dimethylallyl diphosphate (DMAPP). Acts in the terminal step of the DOXP/MEP pathway for isoprenoid precursor biosynthesis. This chain is 4-hydroxy-3-methylbut-2-enyl diphosphate reductase, found in Bacillus cytotoxicus (strain DSM 22905 / CIP 110041 / 391-98 / NVH 391-98).